A 312-amino-acid chain; its full sequence is Copper chaperone for superoxide dismutase, chloroplastic (312 aa).

The N-terminal 78 residues, 1 to 78 (MVGFLRALTA…AAAAATADLS (78 aa)), are a transit peptide targeting the chloroplast. The 64-residue stretch at 89–152 (ELMTEFMVDM…TLHQTGRDAR (64 aa)) folds into the HMA domain. Residues Cys100, Cys103, Cys301, and Cys303 each coordinate Cu cation.

It in the C-terminal section; belongs to the Cu-Zn superoxide dismutase family. Cu(2+) serves as cofactor.

Its subcellular location is the plastid. It localises to the chloroplast. Its function is as follows. Copper chaperone for superoxide dismutases (SODs). Binds copper ions and delivers them specifically to SODs. Is required for assistance in SODs disulfide bond formation and thereby activation of SODs. This is Copper chaperone for superoxide dismutase, chloroplastic (CCS) from Oryza sativa subsp. japonica (Rice).